The primary structure comprises 219 residues: ATP phosphoribosyltransferase (219 aa).

It belongs to the ATP phosphoribosyltransferase family. Short subfamily. As to quaternary structure, heteromultimer composed of HisG and HisZ subunits.

The protein localises to the cytoplasm. It catalyses the reaction 1-(5-phospho-beta-D-ribosyl)-ATP + diphosphate = 5-phospho-alpha-D-ribose 1-diphosphate + ATP. Its pathway is amino-acid biosynthesis; L-histidine biosynthesis; L-histidine from 5-phospho-alpha-D-ribose 1-diphosphate: step 1/9. Functionally, catalyzes the condensation of ATP and 5-phosphoribose 1-diphosphate to form N'-(5'-phosphoribosyl)-ATP (PR-ATP). Has a crucial role in the pathway because the rate of histidine biosynthesis seems to be controlled primarily by regulation of HisG enzymatic activity. In Clostridium kluyveri (strain NBRC 12016), this protein is ATP phosphoribosyltransferase.